Here is a 341-residue protein sequence, read N- to C-terminus: L-threonine 3-dehydrogenase (341 aa).

Residue cysteine 38 coordinates Zn(2+). Active-site charge relay system residues include threonine 40 and histidine 43. 6 residues coordinate Zn(2+): histidine 63, glutamate 64, cysteine 93, cysteine 96, cysteine 99, and cysteine 107. Residues isoleucine 175, aspartate 195, arginine 200, 262–264 (LGI), and 286–287 (IY) each bind NAD(+).

The protein belongs to the zinc-containing alcohol dehydrogenase family. Homotetramer. Zn(2+) is required as a cofactor.

The protein resides in the cytoplasm. It catalyses the reaction L-threonine + NAD(+) = (2S)-2-amino-3-oxobutanoate + NADH + H(+). It participates in amino-acid degradation; L-threonine degradation via oxydo-reductase pathway; glycine from L-threonine: step 1/2. In terms of biological role, catalyzes the NAD(+)-dependent oxidation of L-threonine to 2-amino-3-ketobutyrate. In Idiomarina loihiensis (strain ATCC BAA-735 / DSM 15497 / L2-TR), this protein is L-threonine 3-dehydrogenase.